The primary structure comprises 204 residues: Large ribosomal subunit protein uL4 (204 aa).

The interval 48 to 75 is disordered; sequence HTKGRSDVSGGGKKPWRQKGRGGARAGS.

It belongs to the universal ribosomal protein uL4 family. In terms of assembly, part of the 50S ribosomal subunit.

Functionally, one of the primary rRNA binding proteins, this protein initially binds near the 5'-end of the 23S rRNA. It is important during the early stages of 50S assembly. It makes multiple contacts with different domains of the 23S rRNA in the assembled 50S subunit and ribosome. Forms part of the polypeptide exit tunnel. In Campylobacter fetus subsp. fetus (strain 82-40), this protein is Large ribosomal subunit protein uL4.